A 200-amino-acid polypeptide reads, in one-letter code: GSSPCRSVIMTAKAVGVELNKKLLNLQAGEHLKPEFVKINPQHTIPTLVDNGFALWESRAIQVYLVEKYGKTDSLYPKCPKKRAVINQRLYFDMGTLYQSFANYYYPQVFAKAPADPEAFKKIEAAFEFLNTFLEGQEYAAGDSLTVADIALVASVSTFEVAGFEISKYANVNKWYENAKKVTPGWEENWAGCLEFKKYF.

One can recognise a GST N-terminal domain in the interval 1 to 73; sequence GSSPCRSVIM…YLVEKYGKTD (73 aa). Residues Ser-2, 43–45, and 57–59 each bind glutathione; these read HTI and ESR. Positions 79-200 constitute a GST C-terminal domain; sequence CPKKRAVINQ…AGCLEFKKYF (122 aa).

It belongs to the GST superfamily. Theta family. Homodimer.

The enzyme catalyses RX + glutathione = an S-substituted glutathione + a halide anion + H(+). The catalysed reaction is 1,1,1-trichloro-2,2-bis(4-chlorophenyl)ethane = 1,1-dichloro-2,2-bis(4-chlorophenyl)ethylene + chloride + H(+). Conjugation of reduced glutathione to a wide number of exogenous and endogenous hydrophobic electrophiles. Has DDT dehydrochlorinase activity. In Drosophila teissieri (Fruit fly), this protein is Glutathione S-transferase 1-1 (GstD1).